Here is a 308-residue protein sequence, read N- to C-terminus: Glutaminase (308 aa).

Residues S66, N117, E162, N169, Y193, Y244, and V262 each contribute to the substrate site.

Belongs to the glutaminase family. In terms of assembly, homotetramer.

The enzyme catalyses L-glutamine + H2O = L-glutamate + NH4(+). The sequence is that of Glutaminase from Natranaerobius thermophilus (strain ATCC BAA-1301 / DSM 18059 / JW/NM-WN-LF).